Consider the following 868-residue polypeptide: Protein NIP100 (868 aa).

The 51-residue stretch at 34–84 folds into the CAP-Gly domain; sequence GETQFAKGIWYGIELDKPLGKNDGSANGIRYFDIDLKKANSNGGYYGLFCK. Coiled-coil stretches lie at residues 101–175, 207–375, and 645–776; these read LNGN…HLDN, LDQT…QEEL, and SLLS…QIKE.

Component of the dynactin complex composed of at least ARP1, JNM1, NIP100 and ARP10. Dynactin comprises a short rod of the ARP1 filament attached to ARP10 at its pointed-end and probably associated with the capping protein at its barbed-end. The rod is implicated in dynein cargo binding. A sidearm formed by NIP100 projects from the ARP1 filament and is implicated in motor binding.

The protein localises to the cytoplasm. It is found in the cytoskeleton. It localises to the spindle pole. In terms of biological role, motor-binding component of the dynactin complex which assists cytoplasmic dynein by increasing its processivity and by regulation of its cargo binding. The dynactin complex is required for the spindle translocation late in anaphase and is involved in a cell wall synthesis checkpoint. This is Protein NIP100 (NIP100) from Saccharomyces cerevisiae (strain ATCC 204508 / S288c) (Baker's yeast).